The primary structure comprises 245 residues: Probable histone chaperone asf-1-like protein (245 aa).

Acidic residues predominate over residues 157 to 166 (EDPVAEPVDE). Positions 157-245 (EDPVAEPVDE…SGDVEMGDKH (89 aa)) are disordered. A compositionally biased stretch (basic and acidic residues) spans 167-183 (EANKVFDEDDLMPLHDD). A compositionally biased stretch (acidic residues) spans 184–206 (GQDDDEEEEDDDETGPNTEEVDL). Residues 215-245 (ANAHDGTEQKNGEESMEHDGASGDVEMGDKH) are compositionally biased toward basic and acidic residues.

The protein belongs to the ASF1 family. Interacts with histone H3 and histone H4.

The protein localises to the nucleus. In terms of biological role, histone chaperone that facilitates histone deposition and histone exchange and removal during nucleosome assembly and disassembly. This is Probable histone chaperone asf-1-like protein (asfl-1) from Caenorhabditis elegans.